The sequence spans 274 residues: MASTFIPGLNPQNPHYIPGYTGHCPLLRFSMGQTYGQMTGQLLRGSPGLAWPPAHRTLLPPIQPPRSPEPRRRSLPVRPGHERLSSSMVPGYTGFVPQAQFIFAKNCSQVWAEALNGFTQRNGGQGSQELPKEAKGEKDVEKDQEPKPEVEKEPELGQEAEQASPYSMDDRDPRKFFMSGFTGYVPRARFLFGSSFPVLSNQALQEFGEMKSPGRSQKDPKHLPALSRTYPQHLGLLPKYGGYVPGYKFQFGRTYGHLTQDALGLSTLQKQLLV.

2 disordered regions span residues 46 to 89 (SPGL…SSMV) and 119 to 171 (TQRN…MDDR). Basic and acidic residues predominate over residues 130-155 (LPKEAKGEKDVEKDQEPKPEVEKEPE).

This sequence belongs to the CIMIP2 family. Microtubule inner protein component of sperm flagellar doublet microtubules. In terms of tissue distribution, expressed in trachea multiciliated cells.

Its subcellular location is the cytoplasm. It localises to the cytoskeleton. It is found in the cilium axoneme. The protein resides in the flagellum axoneme. Its function is as follows. Microtubule inner protein (MIP) part of the dynein-decorated doublet microtubules (DMTs) in cilia axoneme, which is required for motile cilia beating. The protein is Ciliary microtubule inner protein 2B (CIMIP2B) of Bos taurus (Bovine).